Here is a 1166-residue protein sequence, read N- to C-terminus: Poly [ADP-ribose] polymerase tankyrase-2 (1166 aa).

3 ANK repeats span residues 57–89 (RKST…ARDD), 90–122 (GGLI…ARDN), and 123–155 (WNYT…IRNT). Residue N203 is modified to (3S)-3-hydroxyasparagine; by HIF1AN; partial. ANK repeat units follow at residues 210 to 242 (RKST…AKDK), 243 to 275 (GDLV…AMDL), 276 to 308 (WQFT…LLNC), 363 to 398 (THET…EKTK), 399 to 431 (EFLT…ALDN), and 432 to 464 (LGQT…IISL). A (3S)-3-hydroxyhistidine; by HIF1AN; partial modification is found at H238. The residue at position 271 (N271) is a (3S)-3-hydroxyasparagine; by HIF1AN; partial. Position 427 is a (3S)-3-hydroxyasparagine; by HIF1AN; partial (N427). Residue N518 is modified to (3S)-3-hydroxyasparagine; by HIF1AN; partial. ANK repeat units follow at residues 525–557 (RQST…AKDK), 558–590 (GGLV…VADL), and 591–623 (WKFT…KKNR). The tract at residues 545 to 553 (LLQHGADVH) is HIF1AN-binding. (3S)-3-hydroxyhistidine; by HIF1AN; partial is present on H553. Residue N586 is modified to (3S)-3-hydroxyasparagine; by HIF1AN; partial. N671, N706, and N739 each carry (3S)-3-hydroxyasparagine; by HIF1AN; partial. 3 ANK repeats span residues 678–710 (RHST…AQDK), 711–743 (GGLI…ATDK), and 744–776 (WAFT…LKNQ). The segment at 819-839 (GATADALSSGPSSPSSLSAAS) is disordered. Residues 822-839 (ADALSSGPSSPSSLSAAS) show a composition bias toward low complexity. The SAM domain occupies 873–936 (GVDFSITQFV…IKGVERLISG (64 aa)). Positions 959–1164 (SPDDKEFQSV…YQIMRPEGMV (206 aa)) constitute a PARP catalytic domain. The Zn(2+) site is built by C1081, H1084, C1089, and C1092.

The protein belongs to the ARTD/PARP family. In terms of assembly, oligomerizes and associates with TNKS. Interacts with the cytoplasmic domain of LNPEP/Otase in SLC2A4/GLUT4-vesicles. Binds to the N-terminus of Grb14 and TRF1 with its ankyrin repeat region. Interacts with HIF1AN. Interacts with RNF146; this interaction leads to ubiquitination and proteasomal degradation. Interacts with NUMA1. Ubiquitinated at 'Lys-48' and 'Lys-63' by RNF146 when auto-poly-ADP-ribosylated; this leads to degradation. Deubiquitinated by USP25; leading to stabilization. In terms of processing, ADP-ribosylated (-auto). Poly-ADP-ribosylated protein is recognized by RNF146, followed by ubiquitination. Post-translationally, the crystallographic evidence suggests that the 3-hydroxyhistidine may be the (3S) stereoisomer. In terms of tissue distribution, highly expressed in placenta, skeletal muscle, liver, brain, kidney, heart, thymus, spinal cord, lung, peripheral blood leukocytes, pancreas, lymph nodes, spleen, prostate, testis, ovary, small intestine, colon, mammary gland, breast and breast carcinoma, and in common-type meningioma. Highly expressed in fetal liver, heart and brain.

It localises to the cytoplasm. Its subcellular location is the golgi apparatus membrane. It is found in the nucleus. The protein resides in the chromosome. The protein localises to the telomere. The catalysed reaction is NAD(+) + (ADP-D-ribosyl)n-acceptor = nicotinamide + (ADP-D-ribosyl)n+1-acceptor + H(+).. The enzyme catalyses L-aspartyl-[protein] + NAD(+) = 4-O-(ADP-D-ribosyl)-L-aspartyl-[protein] + nicotinamide. It catalyses the reaction L-glutamyl-[protein] + NAD(+) = 5-O-(ADP-D-ribosyl)-L-glutamyl-[protein] + nicotinamide. Specifically inhibited by XAV939, a small molecule, leading to inhibit the Wnt signaling pathway by stabilizing AXIN1 and AXIN2. Inhibited by talazoparib. Its function is as follows. Poly-ADP-ribosyltransferase involved in various processes such as Wnt signaling pathway, telomere length and vesicle trafficking. Acts as an activator of the Wnt signaling pathway by mediating poly-ADP-ribosylation of AXIN1 and AXIN2, 2 key components of the beta-catenin destruction complex: poly-ADP-ribosylated target proteins are recognized by RNF146, which mediates their ubiquitination and subsequent degradation. Also mediates poly-ADP-ribosylation of BLZF1 and CASC3, followed by recruitment of RNF146 and subsequent ubiquitination. Mediates poly-ADP-ribosylation of TERF1, thereby contributing to the regulation of telomere length. Stimulates 26S proteasome activity. The polypeptide is Poly [ADP-ribose] polymerase tankyrase-2 (Homo sapiens (Human)).